Consider the following 227-residue polypeptide: MATEDVKLIGSWASVYVMRARIALHLKSISYEFLQETYGSKSELLLKSNPVHKKMPVLIHADKPVCESNIIVHYIDEAWNSSGPSILPSHPYDRAIARFWAAYIDDQWFISVRSILTAQGDEEKKAAIAQVEERTKLLEKAFNDCSQGKPFFNGDHIGYLDIALGSFLGWWRVVELDANHKFLDETKTPSLVKWAERFCDDPAVKPIMPEITKLAEFARKLFPKRQA.

Positions 4–83 (EDVKLIGSWA…YIDEAWNSSG (80 aa)) constitute a GST N-terminal domain. Residues 14 to 15 (SV), 40 to 41 (SK), 54 to 55 (KM), and 67 to 68 (ES) contribute to the glutathione site. Residues 90–221 (HPYDRAIARF…TKLAEFARKL (132 aa)) form the GST C-terminal domain.

Belongs to the GST superfamily. Tau family.

Its subcellular location is the cytoplasm. The protein resides in the cytosol. It carries out the reaction RX + glutathione = an S-substituted glutathione + a halide anion + H(+). May be involved in the conjugation of reduced glutathione to a wide number of exogenous and endogenous hydrophobic electrophiles and have a detoxification role against certain herbicides. In Arabidopsis thaliana (Mouse-ear cress), this protein is Glutathione S-transferase U18 (GSTU18).